A 1235-amino-acid chain; its full sequence is Ubiquitin carboxyl-terminal hydrolase 40 (1235 aa).

The region spanning 41 to 482 (SGIRNQGGTC…SAYMLFYRKA (442 aa)) is the USP domain. C50 (nucleophile) is an active-site residue. H305 acts as the Proton acceptor in catalysis.

Belongs to the peptidase C19 family.

The catalysed reaction is Thiol-dependent hydrolysis of ester, thioester, amide, peptide and isopeptide bonds formed by the C-terminal Gly of ubiquitin (a 76-residue protein attached to proteins as an intracellular targeting signal).. In Mus musculus (Mouse), this protein is Ubiquitin carboxyl-terminal hydrolase 40 (Usp40).